A 120-amino-acid chain; its full sequence is Ribosome-binding factor A (120 aa).

The protein belongs to the RbfA family. As to quaternary structure, monomer. Binds 30S ribosomal subunits, but not 50S ribosomal subunits or 70S ribosomes.

The protein resides in the cytoplasm. One of several proteins that assist in the late maturation steps of the functional core of the 30S ribosomal subunit. Associates with free 30S ribosomal subunits (but not with 30S subunits that are part of 70S ribosomes or polysomes). Required for efficient processing of 16S rRNA. May interact with the 5'-terminal helix region of 16S rRNA. This Dictyoglomus thermophilum (strain ATCC 35947 / DSM 3960 / H-6-12) protein is Ribosome-binding factor A.